Consider the following 333-residue polypeptide: MVSKSRWKLLAMLALVLVVMVWYSISREDRYIELFYFPIPEKKEPCLQGEAESKASKLFGNYSRDQPIFLRLEDYFWVKTPSAYELPYGTKGSEDLLLRVLAITSSSIPKNIQSLRCRRCVVVGNGHRLRNSSLGDAINKYDVVIRLNNAPVAGYEGDVGSKTTMRLFYPESAHFDPKVENNPDTLLVLVAFKAMDFHWIETILSDKKRVRKGFWKQPPLIWDVNPKQIRILNPFFMEIAADKLLSLPMQQPRKIKQKPTTGLLAITLALHLCDLVHIAGFGYPDAYNKKQTIHYYEQITLKSMAGSGHNVSQEALAIKRMLEMGAIKNLTSF.

The Cytoplasmic portion of the chain corresponds to 1-8; that stretch reads MVSKSRWK. A helical; Signal-anchor for type II membrane protein membrane pass occupies residues 9 to 26; sequence LLAMLALVLVVMVWYSIS. Topologically, residues 27–333 are lumenal; that stretch reads REDRYIELFY…MGAIKNLTSF (307 aa). Asn61, Asn131, Asn310, and Asn329 each carry an N-linked (GlcNAc...) asparagine glycan. An intrachain disulfide couples Cys120 to Cys273.

It belongs to the glycosyltransferase 29 family. In terms of processing, the soluble form derives from the membrane form by proteolytic processing. Highly expressed in adult placenta, heart and kidney.

Its subcellular location is the golgi apparatus. The protein localises to the golgi stack membrane. It localises to the secreted. It carries out the reaction a beta-D-galactosyl-(1-&gt;3)-N-acetyl-beta-D-galactosaminyl derivative + CMP-N-acetyl-beta-neuraminate = an N-acetyl-alpha-neuraminyl-(2-&gt;3)-beta-D-galactosyl-(1-&gt;3)-N-acetyl-beta-D-galactosaminyl derivative + CMP + H(+). The enzyme catalyses a beta-D-galactosyl-(1-&gt;3)-N-acetyl-alpha-D-galactosaminyl derivative + CMP-N-acetyl-beta-neuraminate = an N-acetyl-alpha-neuraminyl-(2-&gt;3)-beta-D-galactosyl-(1-&gt;3)-N-acetyl-alpha-D-galactosaminyl derivative + CMP + H(+). The catalysed reaction is a beta-D-galactosyl-(1-&gt;4)-N-acetyl-beta-D-glucosaminyl derivative + CMP-N-acetyl-beta-neuraminate = an N-acetyl-alpha-neuraminyl-(2-&gt;3)-beta-D-galactosyl-(1-&gt;4)-N-acetyl-beta-D-glucosaminyl derivative + CMP + H(+). It catalyses the reaction a ganglioside GM1 (d18:1(4E)) + CMP-N-acetyl-beta-neuraminate = a ganglioside GD1a (d18:1(4E)) + CMP + H(+). It carries out the reaction a ganglioside GA1 (d18:1(4E)) + CMP-N-acetyl-beta-neuraminate = a ganglioside GM1b (d18:1(4E)) + CMP + H(+). The enzyme catalyses a ganglioside GT1c (d18:1(4E)) + CMP-N-acetyl-beta-neuraminate = a ganglioside GQ1c (d18:1(4E)) + CMP + H(+). The catalysed reaction is a neolactoside nLc4Cer + CMP-N-acetyl-beta-neuraminate = a neolactoside IV(3)-alpha-NeuAc-nLc4Cer + CMP + H(+). It catalyses the reaction a neolactoside nLc4Cer(d18:1(4E)) + CMP-N-acetyl-beta-neuraminate = a neolactoside IV(3)-alpha-NeuAc-nLc4Cer(d18:1(4E)) + CMP + H(+). Its pathway is protein modification; protein glycosylation. It participates in glycolipid biosynthesis. Its function is as follows. A beta-galactoside alpha2-3 sialyltransferase involved in terminal sialylation of glycoproteins and glycolipids. Catalyzes the transfer of sialic acid (N-acetyl-neuraminic acid; Neu5Ac) from the nucleotide sugar donor CMP-Neu5Ac onto acceptor Galbeta-(1-&gt;3)-GalNAc- and Galbeta-(1-&gt;4)-GlcNAc-terminated glycoconjugates through an alpha2-3 linkage. Plays a major role in hemostasis. Responsible for sialylation of plasma VWF/von Willebrand factor, preventing its recognition by asialoglycoprotein receptors (ASGPR) and subsequent clearance. Regulates ASGPR-mediated clearance of platelets. Participates in the biosynthesis of the sialyl Lewis X epitopes, both on O- and N-glycans, which are recognized by SELE/E-selectin, SELP/P-selectin and SELL/L-selectin. Essential for selectin-mediated rolling and adhesion of leukocytes during extravasation. Contributes to adhesion and transendothelial migration of neutrophils likely through terminal sialylation of CXCR2. In glycosphingolipid biosynthesis, sialylates GM1 and GA1 gangliosides to form GD1a and GM1b, respectively. Metabolizes brain c-series ganglioside GT1c forming GQ1c. Synthesizes ganglioside LM1 (IV3Neu5Ac-nLc4Cer), a major structural component of peripheral nerve myelin. This Homo sapiens (Human) protein is CMP-N-acetylneuraminate-beta-galactosamide-alpha-2,3-sialyltransferase 4 (ST3GAL4).